The chain runs to 226 residues: Cobalt transport protein CbiM 1 (226 aa).

The next 6 membrane-spanning stretches (helical) occupy residues 6 to 26 (GFLPVEHAIGWSVASAPVVAY), 43 to 63 (MLLGVAAAFTFVLSALKMPSV), 75 to 95 (LGAILFGPSAVAPIGAVVLLF), 107 to 127 (TLGANIFSMAIVGPFAAAAVF), 135 to 155 (FPFGVGVFLAASLGDLLTYVT), and 181 to 201 (VFALTQIPLAISEGLLTVVVM).

It belongs to the CbiM family. Forms an energy-coupling factor (ECF) transporter complex composed of an ATP-binding protein (A component, CbiO), a transmembrane protein (T component, CbiQ) and 2 possible substrate-capture proteins (S components, CbiM and CbiN) of unknown stoichimetry.

It is found in the cell inner membrane. It participates in cofactor biosynthesis; adenosylcobalamin biosynthesis. In terms of biological role, part of the energy-coupling factor (ECF) transporter complex CbiMNOQ involved in cobalt import. The polypeptide is Cobalt transport protein CbiM 1 (cbim1) (Pelobacter propionicus (strain DSM 2379 / NBRC 103807 / OttBd1)).